A 250-amino-acid polypeptide reads, in one-letter code: NADH-quinone oxidoreductase subunit C (250 aa).

This sequence belongs to the complex I 30 kDa subunit family. As to quaternary structure, NDH-1 is composed of 14 different subunits. Subunits NuoB, C, D, E, F, and G constitute the peripheral sector of the complex.

The protein resides in the cell inner membrane. It carries out the reaction a quinone + NADH + 5 H(+)(in) = a quinol + NAD(+) + 4 H(+)(out). In terms of biological role, NDH-1 shuttles electrons from NADH, via FMN and iron-sulfur (Fe-S) centers, to quinones in the respiratory chain. The immediate electron acceptor for the enzyme in this species is believed to be ubiquinone. Couples the redox reaction to proton translocation (for every two electrons transferred, four hydrogen ions are translocated across the cytoplasmic membrane), and thus conserves the redox energy in a proton gradient. This chain is NADH-quinone oxidoreductase subunit C, found in Xanthomonas oryzae pv. oryzae (strain PXO99A).